A 424-amino-acid polypeptide reads, in one-letter code: Zinc metalloproteinase-disintegrin-like brevilysin H2b (424 aa).

Residue Gln1 is modified to Pyrrolidone carboxylic acid. The region spanning 9–207 (RYVKLAIVAD…YKPQCILNEP (199 aa)) is the Peptidase M12B domain. Asn69 carries an N-linked (GlcNAc...) asparagine glycan. Asp96 is a binding site for Ca(2+). 3 cysteine pairs are disulfide-bonded: Cys120/Cys202, Cys164/Cys186, and Cys166/Cys169. His145 is a Zn(2+) binding site. The active site involves Glu146. Residues His149 and His155 each coordinate Zn(2+). Asn185 carries an N-linked (GlcNAc...) asparagine glycan. Residues Cys202, Asn205, Val217, Asn220, Leu222, Glu224, Glu227, and Asp230 each coordinate Ca(2+). Positions 215-301 (PPVCGNELLE…DCPTDDLQRN (87 aa)) constitute a Disintegrin domain. 14 disulfides stabilise this stretch: Cys218-Cys247, Cys229-Cys242, Cys231-Cys237, Cys241-Cys264, Cys255-Cys261, Cys260-Cys286, Cys273-Cys293, Cys280-Cys312, Cys305-Cys317, Cys324-Cys374, Cys339-Cys385, Cys352-Cys362, Cys369-Cys411, and Cys405-Cys417. Residues 279-281 (DCD) carry the D/ECD-tripeptide motif. Residues Asp281, Glu284, and Asp296 each contribute to the Ca(2+) site.

Belongs to the venom metalloproteinase (M12B) family. P-III subfamily. P-IIIa sub-subfamily. In terms of assembly, monomer. Zn(2+) is required as a cofactor. Post-translationally, glycosylated. In terms of tissue distribution, expressed by the venom gland.

It localises to the secreted. Its proteolytic activity is inhibited by EDTA, TPEN, 1,10-phenanthroline, and some thiol compounds, but is enhanced by alkaline earth metal ions (Mg2+, Ca2+, Sr2+, and Ba2+). Its activity is not modulated by urea (4 M). In terms of biological role, non-hemorrhagic metalloproteinase that degrades fibrinogen. The alpha chain (FGA) is rapidly degraded, the beta chain (FGB) is degraded very slowly, while the gamma chain is left intact. Shows a prefential cleavage at X-Leu bonds. Cleaves insulin B chain at '29-His-|-Leu-30', '33-Ser-|-His-34', '38-Ala-|-Leu-39' and '40-Tyr-|-Leu-41' bonds. The polypeptide is Zinc metalloproteinase-disintegrin-like brevilysin H2b (Gloydius brevicauda (Korean slamosa snake)).